The following is a 117-amino-acid chain: uncharacterized protein (117 aa).

This is an uncharacterized protein from Acidianus convivator (ABV).